The chain runs to 494 residues: Glucose-6-phosphate 1-dehydrogenase (494 aa).

Arg-46 and Lys-150 together coordinate NADP(+). Residues His-180, Lys-184, Glu-218, and Asp-237 each contribute to the substrate site. The Proton acceptor role is filled by His-242. A substrate-binding site is contributed by Lys-342.

Belongs to the glucose-6-phosphate dehydrogenase family.

It catalyses the reaction D-glucose 6-phosphate + NADP(+) = 6-phospho-D-glucono-1,5-lactone + NADPH + H(+). The protein operates within carbohydrate degradation; pentose phosphate pathway; D-ribulose 5-phosphate from D-glucose 6-phosphate (oxidative stage): step 1/3. Catalyzes the oxidation of glucose 6-phosphate to 6-phosphogluconolactone. The chain is Glucose-6-phosphate 1-dehydrogenase from Aggregatibacter actinomycetemcomitans (Actinobacillus actinomycetemcomitans).